The primary structure comprises 170 residues: Large ribosomal subunit protein uL15 (170 aa).

A compositionally biased stretch (basic and acidic residues) spans 1 to 12 (MKLHDLRPAEGS). The segment at 1-50 (MKLHDLRPAEGSHRKRKRIGRGHGSGKVKTGGKGMMGQKARSGPGPYRTF) is disordered. Residues 13-26 (HRKRKRIGRGHGSG) show a composition bias toward basic residues.

This sequence belongs to the universal ribosomal protein uL15 family. Part of the 50S ribosomal subunit.

Binds to the 23S rRNA. This chain is Large ribosomal subunit protein uL15, found in Chloroflexus aggregans (strain MD-66 / DSM 9485).